A 316-amino-acid polypeptide reads, in one-letter code: uncharacterized protein (316 aa).

A helical membrane pass occupies residues 12-34; that stretch reads RWVCLTSVILFCFCIAVMRYGGV.

It localises to the membrane. This is an uncharacterized protein from Treponema pallidum (strain Nichols).